Reading from the N-terminus, the 406-residue chain is Cyclin-dependent kinase 4 homolog (406 aa).

Residues Thr102–Leu388 enclose the Protein kinase domain. ATP contacts are provided by residues Leu108–Val116 and Lys131. Asp233 functions as the Proton acceptor in the catalytic mechanism. Positions 238 and 251 each coordinate Mg(2+).

It belongs to the protein kinase superfamily. CMGC Ser/Thr protein kinase family. CDC2/CDKX subfamily. As to quaternary structure, interacts with cyd-1; the interaction is likely involved in regulating cdk-4 activity. The cofactor is Mg(2+).

The enzyme catalyses L-seryl-[protein] + ATP = O-phospho-L-seryl-[protein] + ADP + H(+). It carries out the reaction L-threonyl-[protein] + ATP = O-phospho-L-threonyl-[protein] + ADP + H(+). Functionally, serine/threonine-protein kinase which, in association with cyclin D-like protein cyd-1, is required for the progression through the G1 phase of the cell cycle during postembryonic development by phosphorylating and inhibiting lin-35 and fzr-1. In complex with cyd-1, involved in sex determination during gonadogenesis by regulating the asymmetric division of the somatic gonadal precursor cell (SGP). The chain is Cyclin-dependent kinase 4 homolog from Caenorhabditis elegans.